We begin with the raw amino-acid sequence, 213 residues long: Sclerostin (213 aa).

The first 23 residues, 1–23, serve as a signal peptide directing secretion; the sequence is MQLPLALCLVCLLVHTAFRVVEG. The disordered stretch occupies residues 41 to 71; that stretch reads GEYPEPPPELENNKTMNRAENGGRPPHHPFE. Residue Asn53 is glycosylated (N-linked (GlcNAc...) asparagine). 4 disulfide bridges follow: Cys80–Cys134, Cys94–Cys148, Cys105–Cys165, and Cys109–Cys167. One can recognise a CTCK domain in the interval 82–172; it reads ELHFTRYVTD…ASCKCKRLTR (91 aa). The N-linked (GlcNAc...) asparagine glycan is linked to Asn175. The tract at residues 178–213 is disordered; that stretch reads ELKDFGTEAARPQKGRKPRPRARSAKANQAELENAY. Residues 190–201 are compositionally biased toward basic residues; the sequence is QKGRKPRPRARS.

The protein belongs to the sclerostin family. As to quaternary structure, interacts with LRP4 (via the extracellular domain); the interaction facilitates the inhibition of Wnt signaling. Interacts with LRP5 (via the first two YWTD-EGF repeat domains); the interaction inhibits Wnt-mediated signaling. Interacts with LRP6. Widely expressed at low levels with highest levels in bone, cartilage, kidney, liver, bone marrow and primary osteoblasts differentiated for 21 days. Detected in the subendothelial layer of the aortic intima (at protein level).

It localises to the secreted. Its subcellular location is the extracellular space. The protein resides in the extracellular matrix. Its function is as follows. Negative regulator of bone growth that acts through inhibition of Wnt signaling and bone formation. This chain is Sclerostin, found in Homo sapiens (Human).